The chain runs to 196 residues: Probable histone chaperone ASF1A (196 aa).

Over residues 146-157 (VTKFPIDFHPEE) the composition is skewed to basic and acidic residues. A disordered region spans residues 146-196 (VTKFPIDFHPEEEQTAATAAPPEQSDEQQPNVNGEAQVLPDQSVEPKPEES).

Belongs to the ASF1 family. Interacts with histone H3 and histone H4. Component of the HIRA complex made of UBN1, UBN2, ASF1A, CABIN1 and HIRA. Interacts with HIRA. As to expression, expressed in leaves and flower buds.

The protein resides in the nucleus. It localises to the nucleolus. In terms of biological role, histone chaperone that facilitates histone deposition and histone exchange and removal during nucleosome assembly and disassembly. While encoded by a region of the Arabidopsis thaliana genome that is homologous to the Brassica S-locus for self incompatibility, this protein may not play the same role in Arabidopsis thaliana. This Arabidopsis thaliana (Mouse-ear cress) protein is Probable histone chaperone ASF1A (ASF1A).